A 705-amino-acid chain; its full sequence is MSHVLETDIAGRTLKVEYGKVGMLSNCAILVSYGDTVVLINANASKEPRDGIDFFPLSVEYEERLYSVGKIPGGFIKREGRPTENAILHARAIDRPLRPLFPKGYRNDVQIVCTVLSVESDNQPDILAMNGASLALCLSSIPFTTPVANVSVGLINGDFILNPTQSQREESILNLTVSATKERVMMIEAGAEEVDEDTMYNAIRFGFEQCQKIVEFQEEAMRRFGKEKVEPVLYLVDKDIEKEVREFAFPMVKEAMYISDKDLRNEKIDEVKEKVKEEFEEKYPENDSDISEALYKMQKEVVRNMILREKRRPDERAFDEIRKISCEVGLLPRTHGTGLFTRGLTQVMTAATIGPLADVQILDSIEDEEFKRYMHHYNFPSYSVGETRPLRGPGRREIGHGALAEKALEPLIPSEEDFPYTIRLVSEVLSSNGSTSQASVCGSTLALLDAGVPIKRPAAGIAMGLVTNDDLTEEKILTDIQGIEDFFGDMDFKVAGTEKGITALQVDTKISGLSDNCIKETLIKAKDARMYILGKIKECIPEHRAELSPYAPRVYTMTIAPEKIRDVIGAGGKTINKIIGETGVQIDIKEDGKIYVMSSDSVGANRALKMINDLTKDVEAGEIYLGKVTRTTNFGAFVEILPGKEGLVHISKLDFTRVNKVEDVVSVGDEILVKVTDIDDQGRINLSRRDAIKKEEDEKTKENNH.

D485 and D491 together coordinate Mg(2+). A KH domain is found at 552–611 (PRVYTMTIAPEKIRDVIGAGGKTINKIIGETGVQIDIKEDGKIYVMSSDSVGANRALKMI). The 69-residue stretch at 621 to 689 (GEIYLGKVTR…DQGRINLSRR (69 aa)) folds into the S1 motif domain.

The protein belongs to the polyribonucleotide nucleotidyltransferase family. Requires Mg(2+) as cofactor.

It localises to the cytoplasm. It carries out the reaction RNA(n+1) + phosphate = RNA(n) + a ribonucleoside 5'-diphosphate. Involved in mRNA degradation. Catalyzes the phosphorolysis of single-stranded polyribonucleotides processively in the 3'- to 5'-direction. The protein is Polyribonucleotide nucleotidyltransferase of Clostridium tetani (strain Massachusetts / E88).